Here is a 475-residue protein sequence, read N- to C-terminus: Ribulose bisphosphate carboxylase large chain (475 aa).

A propeptide spanning residues 1–2 is cleaved from the precursor; the sequence is MS. Residue P3 is modified to N-acetylproline. K14 is subject to N6,N6,N6-trimethyllysine. Residues N123 and T173 each coordinate substrate. K175 acts as the Proton acceptor in catalysis. K177 serves as a coordination point for substrate. Mg(2+)-binding residues include K201, D203, and E204. K201 bears the N6-carboxylysine mark. H294 serves as the catalytic Proton acceptor. Substrate is bound by residues R295, H327, and S379.

It belongs to the RuBisCO large chain family. Type I subfamily. As to quaternary structure, heterohexadecamer of 8 large chains and 8 small chains; disulfide-linked. The disulfide link is formed within the large subunit homodimers. Requires Mg(2+) as cofactor. The disulfide bond which can form in the large chain dimeric partners within the hexadecamer appears to be associated with oxidative stress and protein turnover.

The protein localises to the plastid. It localises to the chloroplast. It carries out the reaction 2 (2R)-3-phosphoglycerate + 2 H(+) = D-ribulose 1,5-bisphosphate + CO2 + H2O. The catalysed reaction is D-ribulose 1,5-bisphosphate + O2 = 2-phosphoglycolate + (2R)-3-phosphoglycerate + 2 H(+). RuBisCO catalyzes two reactions: the carboxylation of D-ribulose 1,5-bisphosphate, the primary event in carbon dioxide fixation, as well as the oxidative fragmentation of the pentose substrate in the photorespiration process. Both reactions occur simultaneously and in competition at the same active site. The polypeptide is Ribulose bisphosphate carboxylase large chain (Nandina domestica (Heavenly bamboo)).